An 833-amino-acid chain; its full sequence is Glycerol-3-phosphate acyltransferase (833 aa).

An HXXXXD motif motif is present at residues 309-314 (CHRSHI).

It belongs to the GPAT/DAPAT family.

It localises to the cell inner membrane. The enzyme catalyses sn-glycerol 3-phosphate + an acyl-CoA = a 1-acyl-sn-glycero-3-phosphate + CoA. It participates in phospholipid metabolism; CDP-diacylglycerol biosynthesis; CDP-diacylglycerol from sn-glycerol 3-phosphate: step 1/3. The polypeptide is Glycerol-3-phosphate acyltransferase (Pseudomonas savastanoi pv. phaseolicola (strain 1448A / Race 6) (Pseudomonas syringae pv. phaseolicola (strain 1448A / Race 6))).